The chain runs to 1954 residues: Protein abnormal spindle (1954 aa).

Positions 134-155 (VKNPRKFPTVGKTLQLKSPTGA) are disordered. Phosphoserine is present on residues Ser-151 and Ser-360. Thr-364 carries the phosphothreonine modification. Ser-388, Ser-390, Ser-395, Ser-398, Ser-491, Ser-495, Ser-497, Ser-501, Ser-504, and Ser-514 each carry phosphoserine. The segment at 476-548 (KSVKGSPVKN…SSSAHAWPHA (73 aa)) is disordered. Polar residues predominate over residues 498–507 (DAPSNESLYR). Low complexity predominate over residues 528-548 (RSAAPANASARSSSAHAWPHA). Residues 836–968 (KETKDILLRF…LLWQLIYKFR (133 aa)) enclose the Calponin-homology (CH) domain. 3 consecutive IQ domains span residues 1004–1033 (RHRAATVIQAVFRGHQMRKYVKLFKTERTQ), 1386–1415 (TQAAVSCLQMHWRNHLLRKRERNSFLQLRQ), and 1467–1496 (QREAIIKVQRRYRGNLEMRKQIEVYQKQRQ). Positions 1614-1641 (RANRSMKQARQEFVQLRTIAVHLQQKFR) form a coiled coil. IQ domains lie at 1656–1687 (LRCSMPGFQARARGFMARKRFQALMTPEMMDL) and 1690–1721 (QKRAAKVIQRYWRGYLIRRRQKHQGLLDIRKR).

It is found in the cytoplasm. It localises to the nucleus. The protein localises to the cytoskeleton. The protein resides in the spindle. Its subcellular location is the microtubule organizing center. It is found in the perinuclear region. Its function is as follows. Required to maintain the structure of the centrosomal microtubule organizing center (MTOC) during mitosis. May have a preferential role in regulating neurogenesis. Required for germ cell mitosis and oocyte differentiation. This Drosophila melanogaster (Fruit fly) protein is Protein abnormal spindle.